The chain runs to 387 residues: Ferrochelatase (387 aa).

The Fe cation site is built by histidine 196 and glutamate 277.

It belongs to the ferrochelatase family.

The protein resides in the cytoplasm. The enzyme catalyses heme b + 2 H(+) = protoporphyrin IX + Fe(2+). It functions in the pathway porphyrin-containing compound metabolism; protoheme biosynthesis; protoheme from protoporphyrin-IX: step 1/1. Functionally, catalyzes the ferrous insertion into protoporphyrin IX. The polypeptide is Ferrochelatase (Cyanothece sp. (strain PCC 7425 / ATCC 29141)).